The following is a 94-amino-acid chain: Small ribosomal subunit protein uS17 (94 aa).

Residues 1-22 (MSEQTSAASTTDRGDRKTRRGY) form a disordered region.

Belongs to the universal ribosomal protein uS17 family. As to quaternary structure, part of the 30S ribosomal subunit.

In terms of biological role, one of the primary rRNA binding proteins, it binds specifically to the 5'-end of 16S ribosomal RNA. This is Small ribosomal subunit protein uS17 from Kineococcus radiotolerans (strain ATCC BAA-149 / DSM 14245 / SRS30216).